The chain runs to 334 residues: Fructose-1,6-bisphosphatase class 1 (334 aa).

Mg(2+) contacts are provided by Glu-91, Asp-113, Leu-115, and Asp-116. Residues 116 to 119, Asn-208, and Lys-274 each bind substrate; that span reads DGSS. Position 280 (Glu-280) interacts with Mg(2+).

Belongs to the FBPase class 1 family. As to quaternary structure, homotetramer. Mg(2+) is required as a cofactor.

Its subcellular location is the cytoplasm. The enzyme catalyses beta-D-fructose 1,6-bisphosphate + H2O = beta-D-fructose 6-phosphate + phosphate. It functions in the pathway carbohydrate biosynthesis; gluconeogenesis. In Herminiimonas arsenicoxydans, this protein is Fructose-1,6-bisphosphatase class 1.